Here is a 438-residue protein sequence, read N- to C-terminus: MICFDNSTAHTDSNNNNNQCDLPENYKELVTTGKVEKLILSPSSSLDRPKTLPPKSQEEVLKHQREYEEIQRKAKKTLEREAKEKEKLDAIRKEKERSLIDARKVWEEDIIPVWEKNSKKRDIKKIKDLSWRGLPPAVRGKIWRLCIGNDLRVTDELFNIFLGHANNAYNKTTSPPLKSSLSSSSKSPNINIDLRQANNSIHHSRSPMNTSTDGEDDVLDLETTNMALILQDIQDTFPSLMIFQKGGPLHSDLIDVLGAYICYRPDIGYVPGMTFLAAMFLLNMEKCDAFLSLSNHINSVCFLPFFRQDQSGIPKYLAAMDSTVEALTPPLHKHFKEIGISAKNYLVDWITTLFSKALPLDVATRIWDLVFIEGEIFIYRTALSILRYFISDLIQATYDECIDLFNKLPQRKISEDKLFEEIQSIVLDQRKFDKLLEK.

Residues 54-104 (PKSQEEVLKHQREYEEIQRKAKKTLEREAKEKEKLDAIRKEKERSLIDARK) are a coiled coil. One can recognise a Rab-GAP TBC domain in the interval 133-374 (GLPPAVRGKI…RIWDLVFIEG (242 aa)).

It is found in the contractile vacuole membrane. The protein resides in the cytoplasm. Its function is as follows. May act as a GTPase-activating protein for Rab family protein(s). Required for osmotic regulation by the contractile vacuole in hypo-osmotic environments. Essential for periodic fusion of the contractile vacuole with the plasma membrane and consequent expulsion of water from the cell body. This chain is Drainin (phgA), found in Dictyostelium discoideum (Social amoeba).